A 220-amino-acid polypeptide reads, in one-letter code: Ribonuclease HII (220 aa).

In terms of domain architecture, RNase H type-2 spans 16–216 (PVFAGIDEAG…VRPNPAAEEQ (201 aa)). Residues Asp-22, Glu-23, and Asp-114 each contribute to the a divalent metal cation site.

It belongs to the RNase HII family. Mn(2+) is required as a cofactor. Requires Mg(2+) as cofactor.

The protein resides in the cytoplasm. It carries out the reaction Endonucleolytic cleavage to 5'-phosphomonoester.. Endonuclease that specifically degrades the RNA of RNA-DNA hybrids. In Nitratidesulfovibrio vulgaris (strain ATCC 29579 / DSM 644 / CCUG 34227 / NCIMB 8303 / VKM B-1760 / Hildenborough) (Desulfovibrio vulgaris), this protein is Ribonuclease HII.